We begin with the raw amino-acid sequence, 399 residues long: Transmembrane protein 237 homolog (399 aa).

A compositionally biased stretch (pro residues) spans M1 to P11. Residues M1–K158 form a disordered region. Composition is skewed to basic and acidic residues over residues N36–N45, E111–R135, and K144–K158. The next 4 helical transmembrane spans lie at I222 to F242, M256 to I276, G301 to L321, and V343 to P363.

Belongs to the TMEM237 family.

The protein resides in the membrane. Its subcellular location is the cell projection. The protein localises to the cilium. Its function is as follows. Component of the transition zone in primary cilia. Required for ciliogenesis. The chain is Transmembrane protein 237 homolog from Caenorhabditis elegans.